The chain runs to 143 residues: Transcriptional regulator MraZ (143 aa).

2 consecutive SpoVT-AbrB domains span residues 5-47 and 76-119; these read EFEH…PMTE and ATEC…SAER.

It belongs to the MraZ family. Forms oligomers.

The protein localises to the cytoplasm. Its subcellular location is the nucleoid. This is Transcriptional regulator MraZ from Levilactobacillus brevis (strain ATCC 367 / BCRC 12310 / CIP 105137 / JCM 1170 / LMG 11437 / NCIMB 947 / NCTC 947) (Lactobacillus brevis).